A 377-amino-acid polypeptide reads, in one-letter code: Nitric oxide reductase FlRd-NAD(+) reductase (377 aa).

This sequence belongs to the FAD-dependent oxidoreductase family. It depends on FAD as a cofactor.

It is found in the cytoplasm. The catalysed reaction is 2 reduced [nitric oxide reductase rubredoxin domain] + NAD(+) + H(+) = 2 oxidized [nitric oxide reductase rubredoxin domain] + NADH. Its pathway is nitrogen metabolism; nitric oxide reduction. One of at least two accessory proteins for anaerobic nitric oxide (NO) reductase. Reduces the rubredoxin moiety of NO reductase. The sequence is that of Nitric oxide reductase FlRd-NAD(+) reductase from Escherichia coli O127:H6 (strain E2348/69 / EPEC).